The primary structure comprises 513 residues: Cytochrome P450 monooxygenase orf3 (513 aa).

Residues 11–31 (LVALGLIAATIIIYSFTLTVY) form a helical membrane-spanning segment. N-linked (GlcNAc...) asparagine glycans are attached at residues Asn-211 and Asn-351. A heme-binding site is contributed by Cys-455.

Belongs to the cytochrome P450 family. Requires heme as cofactor.

It is found in the membrane. It participates in mycotoxin biosynthesis. In terms of biological role, cytochrome P450 monooxygenase; part of the gene cluster that mediates the biosynthesis of brefeldin A (BFA), a protein transport inhibitor that shows antiviral, antifungal, and antitumor properties. The proposed biosynthesis of BFA involves formation of an acyclic polyketide chain that is differentially tailored throughout the backbone. The highly reducing polyketide synthase Bref-PKS is proposed to synthesize the precisely reduced octaketide precursor, which could then be directly offloaded by the thiohydrolase enzyme Bref-TH followed by a cytochrome P450 monooxygenase-mediated formation of the cyclopentane ring and macrocyclization to afford 7-deoxy BFA. Alternatively, the first ring annulation can also occur on the ACP-tethered intermediate before the thiohydrolase release and lactonization. The C7-hydroxylation by another cytochrome P450 monooxygenase is believed to be the final step in the process to obtain the final structure of BFA. In addition to the HRPKS Bref-PKS and the thiohydrolase Bref-TH, the brefeldin A biosynthesis cluster contains 4 cytochrome p450 monooxygenases (called orf3 to orf6), as well a the probable cluster-specific transcription regulator orf8. This Eupenicillium brefeldianum (Penicillium brefeldianum) protein is Cytochrome P450 monooxygenase orf3.